A 93-amino-acid chain; its full sequence is Acylphosphatase (93 aa).

In terms of domain architecture, Acylphosphatase-like spans Thr-5–Tyr-93. Catalysis depends on residues Arg-20 and Asn-38.

Belongs to the acylphosphatase family.

The catalysed reaction is an acyl phosphate + H2O = a carboxylate + phosphate + H(+). This Listeria welshimeri serovar 6b (strain ATCC 35897 / DSM 20650 / CCUG 15529 / CIP 8149 / NCTC 11857 / SLCC 5334 / V8) protein is Acylphosphatase (acyP).